We begin with the raw amino-acid sequence, 254 residues long: Pimeloyl-[acyl-carrier protein] methyl ester esterase (254 aa).

The region spanning 16–241 is the AB hydrolase-1 domain; it reads LVLLHGWGMN…QSSHAPFMTE (226 aa). Substrate-binding positions include tryptophan 22, 82–83, and 143–147; these read SL and FMALQ. Serine 82 (nucleophile) is an active-site residue. Catalysis depends on residues aspartate 207 and histidine 235. Histidine 235 is a substrate binding site.

Belongs to the AB hydrolase superfamily. Carboxylesterase BioH family. Monomer.

It is found in the cytoplasm. It catalyses the reaction 6-carboxyhexanoyl-[ACP] methyl ester + H2O = 6-carboxyhexanoyl-[ACP] + methanol + H(+). Its pathway is cofactor biosynthesis; biotin biosynthesis. In terms of biological role, the physiological role of BioH is to remove the methyl group introduced by BioC when the pimeloyl moiety is complete. It allows to synthesize pimeloyl-ACP via the fatty acid synthetic pathway through the hydrolysis of the ester bonds of pimeloyl-ACP esters. This is Pimeloyl-[acyl-carrier protein] methyl ester esterase from Vibrio campbellii (strain ATCC BAA-1116).